The chain runs to 232 residues: Ubiquinone biosynthesis O-methyltransferase (232 aa).

Residues Arg36, Gly55, Asp76, and Met120 each contribute to the S-adenosyl-L-methionine site.

This sequence belongs to the methyltransferase superfamily. UbiG/COQ3 family.

The enzyme catalyses a 3-demethylubiquinol + S-adenosyl-L-methionine = a ubiquinol + S-adenosyl-L-homocysteine + H(+). It carries out the reaction a 3-(all-trans-polyprenyl)benzene-1,2-diol + S-adenosyl-L-methionine = a 2-methoxy-6-(all-trans-polyprenyl)phenol + S-adenosyl-L-homocysteine + H(+). Its pathway is cofactor biosynthesis; ubiquinone biosynthesis. In terms of biological role, O-methyltransferase that catalyzes the 2 O-methylation steps in the ubiquinone biosynthetic pathway. This chain is Ubiquinone biosynthesis O-methyltransferase, found in Paraburkholderia phytofirmans (strain DSM 17436 / LMG 22146 / PsJN) (Burkholderia phytofirmans).